The primary structure comprises 399 residues: uncharacterized protein (399 aa).

Positions 375-399 (AAGGHRGSHGKSEQAATVRVVDDRR) are disordered.

Belongs to the mycobacterial PPE family.

This is an uncharacterized protein from Mycobacterium tuberculosis (strain ATCC 25618 / H37Rv).